The following is a 284-amino-acid chain: Diaminopimelate epimerase (284 aa).

3 residues coordinate substrate: Asn20, Gln53, and Asn73. Residue Cys82 is the Proton donor of the active site. Residues 83–84, Asn167, Asn200, and 218–219 each bind substrate; these read GN and ER. Cys227 serves as the catalytic Proton acceptor. 228–229 provides a ligand contact to substrate; that stretch reads GS.

It belongs to the diaminopimelate epimerase family. In terms of assembly, homodimer.

The protein localises to the cytoplasm. It carries out the reaction (2S,6S)-2,6-diaminopimelate = meso-2,6-diaminopimelate. It functions in the pathway amino-acid biosynthesis; L-lysine biosynthesis via DAP pathway; DL-2,6-diaminopimelate from LL-2,6-diaminopimelate: step 1/1. Catalyzes the stereoinversion of LL-2,6-diaminopimelate (L,L-DAP) to meso-diaminopimelate (meso-DAP), a precursor of L-lysine and an essential component of the bacterial peptidoglycan. This Xylella fastidiosa (strain M12) protein is Diaminopimelate epimerase.